The primary structure comprises 615 residues: Probable methylmalonyl-CoA mutase small subunit (615 aa).

It belongs to the methylmalonyl-CoA mutase family. As to quaternary structure, heterodimer of an alpha and a beta chain. The cofactor is adenosylcob(III)alamin.

It catalyses the reaction (R)-methylmalonyl-CoA = succinyl-CoA. It participates in metabolic intermediate metabolism; propanoyl-CoA degradation; succinyl-CoA from propanoyl-CoA: step 3/3. Catalyzes the isomerization of succinyl-CoA to methylmalonyl-CoA during synthesis of propionate from tricarboxylic acid-cycle intermediates. The polypeptide is Probable methylmalonyl-CoA mutase small subunit (mutA) (Mycobacterium bovis (strain ATCC BAA-935 / AF2122/97)).